We begin with the raw amino-acid sequence, 376 residues long: Thymidine kinase (376 aa).

Positions 1 to 39 are disordered; the sequence is MASYPCHQHASAFDQAARSRGHSNRRTALRPRRQQEATE. The segment covering 19 to 32 has biased composition (basic residues); sequence SRGHSNRRTALRPR. 56 to 63 is a binding site for ATP; sequence GPHGMGKT. Catalysis depends on glutamate 83, which acts as the Proton acceptor. Residues tyrosine 101 and glutamine 125 each contribute to the substrate site. Arginine 216 contributes to the ATP binding site. Arginine 222 lines the substrate pocket.

The protein belongs to the herpesviridae thymidine kinase family. Homodimer.

The enzyme catalyses thymidine + ATP = dTMP + ADP + H(+). Its function is as follows. Catalyzes the transfer of the gamma-phospho group of ATP to thymidine to generate dTMP in the salvage pathway of pyrimidine synthesis. The dTMP serves as a substrate for DNA polymerase during viral DNA replication. Allows the virus to be reactivated and to grow in non-proliferative cells lacking a high concentration of phosphorylated nucleic acid precursors. This Human herpesvirus 1 (strain CL101) (HHV-1) protein is Thymidine kinase.